The chain runs to 128 residues: uncharacterized protein (128 aa).

Positions Met-1–Ala-24 are cleaved as a signal peptide. Composition is skewed to low complexity over residues Ala-24–Gln-44 and Asn-52–Asn-70. Positions Ala-24–Gln-128 are disordered. Positions Ser-71 to Asn-82 are enriched in polar residues. Positions Gly-85–Glu-110 are enriched in basic and acidic residues. Polar residues predominate over residues Asn-113–Gln-128.

This is an uncharacterized protein from Salmonella typhi.